Here is a 227-residue protein sequence, read N- to C-terminus: Neuromodulin (227 aa).

Positions methionine 1–alanine 227 are disordered. S-palmitoyl cysteine attachment occurs at residues cysteine 3 and cysteine 4. A compositionally biased stretch (basic and acidic residues) spans lysine 9–histidine 32. The IQ domain maps to alanine 31–proline 60. The residue at position 41 (serine 41) is a Phosphoserine; by PHK. A compositionally biased stretch (basic and acidic residues) spans glutamate 54–aspartate 84. Low complexity predominate over residues glycine 85 to proline 97. 2 positions are modified to phosphoserine: serine 86 and serine 96. The span at lysine 98–glycine 127 shows a compositional bias: basic and acidic residues. A compositionally biased stretch (low complexity) spans serine 128–threonine 139. Position 138 is a phosphothreonine (threonine 138). Residues serine 142, serine 144, and serine 145 each carry the phosphoserine modification. Residues lysine 146 to glutamine 158 show a composition bias toward basic and acidic residues. The span at alanine 159–serine 193 shows a compositional bias: low complexity. The residue at position 172 (threonine 172) is a Phosphothreonine. 2 positions are modified to phosphoserine; by CK2: serine 192 and serine 193. Positions valine 202 to glutamate 215 are enriched in basic and acidic residues. Acidic residues predominate over residues glycine 216–alanine 227.

The protein belongs to the neuromodulin family. In terms of assembly, identified in a complex containing FGFR4, NCAM1, CDH2, PLCG1, FRS2, SRC, SHC1, GAP43 and CTTN. Interacts (via IQ domain) with calmodulin. Binds calmodulin with a greater affinity in the absence of Ca(2+) than in its presence. Post-translationally, phosphorylated. Phosphorylation of this protein by a protein kinase C is specifically correlated with certain forms of synaptic plasticity. In terms of processing, palmitoylated by ZDHHC3. Palmitoylation is regulated by ARF6 and is essential for plasma membrane association and axonal and dendritic filopodia induction. Deacylated by LYPLA2. Expressed in the hippocampus (at protein level). Expressed in the dorsal root ganglion and the spinal cord (at protein level).

It is found in the cell membrane. The protein resides in the cell projection. Its subcellular location is the growth cone membrane. It localises to the synapse. The protein localises to the filopodium membrane. It is found in the perikaryon. The protein resides in the dendrite. Its subcellular location is the axon. It localises to the cytoplasm. Functionally, this protein is associated with nerve growth. It is a major component of the motile 'growth cones' that form the tips of elongating axons. Plays a role in axonal and dendritic filopodia induction. The sequence is that of Neuromodulin (Gap43) from Mus musculus (Mouse).